The chain runs to 567 residues: Formate--tetrahydrofolate ligase (567 aa).

68 to 75 (TPLGEGKT) is an ATP binding site.

It belongs to the formate--tetrahydrofolate ligase family.

The enzyme catalyses (6S)-5,6,7,8-tetrahydrofolate + formate + ATP = (6R)-10-formyltetrahydrofolate + ADP + phosphate. Its pathway is one-carbon metabolism; tetrahydrofolate interconversion. The chain is Formate--tetrahydrofolate ligase from Desulforamulus reducens (strain ATCC BAA-1160 / DSM 100696 / MI-1) (Desulfotomaculum reducens).